A 605-amino-acid chain; its full sequence is uncharacterized protein (605 aa).

The segment at 111–151 is disordered; that stretch reads VNVNDGKPNDIELSSTSKTENDPPLSLHTTPDDLQGNGVNV.

Its subcellular location is the golgi apparatus. This is an uncharacterized protein from Schizosaccharomyces pombe (strain 972 / ATCC 24843) (Fission yeast).